We begin with the raw amino-acid sequence, 230 residues long: 2-phytyl-1,4-naphtoquinone methyltransferase (230 aa).

This sequence belongs to the class I-like SAM-binding methyltransferase superfamily. MenG/UbiE family.

The enzyme catalyses demethylphylloquinol + S-adenosyl-L-methionine = phylloquinol + S-adenosyl-L-homocysteine + H(+). It participates in cofactor biosynthesis; phylloquinone biosynthesis. Functionally, methyltransferase required for the conversion of 2-phytyl-1,4-beta-naphthoquinol to phylloquinol. The sequence is that of 2-phytyl-1,4-naphtoquinone methyltransferase from Nostoc punctiforme (strain ATCC 29133 / PCC 73102).